A 499-amino-acid polypeptide reads, in one-letter code: Lysine--tRNA ligase (499 aa).

2 residues coordinate Mg(2+): glutamate 409 and glutamate 416.

Belongs to the class-II aminoacyl-tRNA synthetase family. As to quaternary structure, homodimer. The cofactor is Mg(2+).

Its subcellular location is the cytoplasm. It carries out the reaction tRNA(Lys) + L-lysine + ATP = L-lysyl-tRNA(Lys) + AMP + diphosphate. This Pseudomonas fluorescens (strain Pf0-1) protein is Lysine--tRNA ligase.